Reading from the N-terminus, the 100-residue chain is Noncompact myelin-associated protein (100 aa).

Residues 1–28 (MTTATTLGDAVFSLNMTRGEDILYKSSG) are Extracellular-facing. The helical transmembrane segment at 29–49 (AIVAAIVVVVVIIVTLVLILL) threads the bilayer. At 50–100 (KMYNRRMRTRRELEPKSPKPPVPPALDPNSNGSQQPAAVTSDPADVPVETR) the chain is on the cytoplasmic side. Residues 58 to 100 (TRRELEPKSPKPPVPPALDPNSNGSQQPAAVTSDPADVPVETR) are disordered. A compositionally biased stretch (polar residues) spans 77–87 (PNSNGSQQPAA).

Post-translationally, glycosylated. As to expression, expressed in the peripheral nervous system Schwann cells (at protein level).

The protein resides in the cell membrane. Plays a role in myelin formation. The protein is Noncompact myelin-associated protein (Ncmap) of Rattus norvegicus (Rat).